The following is a 108-amino-acid chain: UPF0102 protein Shewmr4_3685 (108 aa).

The protein belongs to the UPF0102 family.

This is UPF0102 protein Shewmr4_3685 from Shewanella sp. (strain MR-4).